The following is a 194-amino-acid chain: Isopentenyl-diphosphate Delta-isomerase (194 aa).

Mn(2+) is bound by residues histidine 23 and histidine 30. One can recognise a Nudix hydrolase domain in the interval 28-162 (PLHLAFSCYV…TTDISPWCRQ (135 aa)). Cysteine 65 is an active-site residue. Histidine 67 provides a ligand contact to Mn(2+). Glutamate 85 lines the Mg(2+) pocket. Positions 112 and 114 each coordinate Mn(2+). Glutamate 114 is a catalytic residue.

This sequence belongs to the IPP isomerase type 1 family. Mg(2+) is required as a cofactor. Mn(2+) serves as cofactor.

Its subcellular location is the cytoplasm. It catalyses the reaction isopentenyl diphosphate = dimethylallyl diphosphate. It participates in isoprenoid biosynthesis; dimethylallyl diphosphate biosynthesis; dimethylallyl diphosphate from isopentenyl diphosphate: step 1/1. Functionally, catalyzes the 1,3-allylic rearrangement of the homoallylic substrate isopentenyl (IPP) to its highly electrophilic allylic isomer, dimethylallyl diphosphate (DMAPP). The chain is Isopentenyl-diphosphate Delta-isomerase from Saccharopolyspora erythraea (strain ATCC 11635 / DSM 40517 / JCM 4748 / NBRC 13426 / NCIMB 8594 / NRRL 2338).